The sequence spans 528 residues: Tyrosine--tRNA ligase, cytoplasmic (528 aa).

Met1 carries the N-acetylmethionine modification. Position 2 is an N-acetylglycine; in Tyrosine--tRNA ligase, cytoplasmic, N-terminally processed (Gly2). Tyr39 provides a ligand contact to L-tyrosine. Position 39 (Tyr39) interacts with trans-resveratrol. A 'HIGH' region motif is present at residues Thr44–Tyr52. 4 residues coordinate L-tyrosine: Tyr166, Gln170, Asp173, and Gln188. Gln170 and Asp173 together coordinate trans-resveratrol. Lys197 bears the N6-acetyllysine mark. Residue Ser205 is modified to Phosphoserine. Position 206 is an N6-acetyllysine (Lys206). The 'KMSKS' region motif lies at Lys222–Ser226. The short motif at Lys242–Lys247 is the Nuclear localization signal element. Residues Ala339 to Val363 are disordered. The 105-residue stretch at Ile364–Phe468 folds into the tRNA-binding domain. At Ser386 the chain carries Phosphoserine. N6-acetyllysine is present on residues Lys474, Lys482, and Lys490.

Belongs to the class-I aminoacyl-tRNA synthetase family. Homodimer. Interacts (when binding to resveratrol) with PARP1; interaction stimulates the poly-ADP-ribosyltransferase activity of PARP1.

It is found in the cytoplasm. Its subcellular location is the nucleus. The catalysed reaction is tRNA(Tyr) + L-tyrosine + ATP = L-tyrosyl-tRNA(Tyr) + AMP + diphosphate + H(+). With respect to regulation, resveratrol strongly inhibits the tyrosine--tRNA ligase activity. Tyrosine--tRNA ligase that catalyzes the attachment of tyrosine to tRNA(Tyr) in a two-step reaction: tyrosine is first activated by ATP to form Tyr-AMP and then transferred to the acceptor end of tRNA(Tyr). Also acts as a positive regulator of poly-ADP-ribosylation in the nucleus, independently of its tyrosine--tRNA ligase activity. Activity is switched upon resveratrol-binding: resveratrol strongly inhibits the tyrosine--tRNA ligase activity and promotes relocalization to the nucleus, where YARS1 specifically stimulates the poly-ADP-ribosyltransferase activity of PARP1. The protein is Tyrosine--tRNA ligase, cytoplasmic (Yars1) of Mus musculus (Mouse).